We begin with the raw amino-acid sequence, 360 residues long: U7 snRNA-associated Sm-like protein LSm11 (360 aa).

The tract at residues 1–29 (MEERERGARSAGAGSPARPPSPRLDVSSD) is disordered. Phosphoserine is present on residues Ser15 and Ser21. Position 41 is an omega-N-methylarginine (Arg41). The interval 68–143 (RGGGRGRGRA…PGRSRKAPRN (76 aa)) is disordered. A compositionally biased stretch (low complexity) spans 78–94 (RGAAAGSGVPAAPGPSG). Lys120 is covalently cross-linked (Glycyl lysine isopeptide (Lys-Gly) (interchain with G-Cter in SUMO2)). Ser154 carries the phosphoserine modification. The 76-residue stretch at 154-229 (SPLGELHRCI…LTLTRLFDRL (76 aa)) folds into the Sm domain. The SM 1 stretch occupies residues 171–204 (VHIRTFKGLRGVCTGFLVAFDKFWNMALTDVDET). The segment at 268–333 (ADTGRGSHKR…SRKKKRKPKV (66 aa)) is disordered. Ser280 bears the Phosphoserine mark. Positions 299–322 (GRTTRTDGSSVGGTFSRATTLSRG) are enriched in polar residues. The segment at 343 to 356 (INQIFIRGENVLLV) is SM 2.

Belongs to the snRNP Sm proteins family. In terms of assembly, component of the heptameric ring U7 snRNP complex, or U7 Sm protein core complex, at least composed of LSM10, LSM11, SNRPB, SNRPD3, SNRPE, SNRPF, SNRPG and U7 snRNA. Formation of the U7 snRNP is an ATP-dependent process mediated by a specialized SMN complex containing at least the Sm protein core complex and additionally, the U7-specific LSM10 and LSM11 proteins. Identified in a histone pre-mRNA complex, at least composed of ERI1, LSM11, SLBP, SNRPB, SYNCRIP and YBX1. Interacts (via the Sm domains) with CLNS1A. Interacts with SMN and ZNF473. Interacts with PRMT5 and WDR77.

The protein resides in the nucleus. Its function is as follows. Component of the U7 snRNP complex that is involved in the histone 3'-end pre-mRNA processing. Increases U7 snRNA levels but not histone 3'-end pre-mRNA processing activity, when overexpressed. Required for cell cycle progression from G1 to S phases. Binds specifically to the Sm-binding site of U7 snRNA. This is U7 snRNA-associated Sm-like protein LSm11 from Homo sapiens (Human).